We begin with the raw amino-acid sequence, 1087 residues long: A-kinase anchor protein 9 (1087 aa).

Residues 5–461 (EVQCQAEKVR…REREKMERIQ (457 aa)) adopt a coiled-coil conformation. The interval 559-572 (SLQKVLEEKVAAAL) is PKA-RII subunit binding domain. Positions 614 to 773 (MESDVSALTW…SEKEDKTEVQ (160 aa)) form a coiled coil. Basic and acidic residues predominate over residues 667–685 (VQDSETKQRERERQSRLHG). The segment at 667 to 691 (VQDSETKQRERERQSRLHGDLGVLE) is disordered.

Interacts with the regulatory region of protein kinase N (PKN), protein phosphatase 2A (PP2A), protein phosphatase 1 (PP1) and the immature non-phosphorylated form of PKC epsilon. Interacts with CIP4 and FNBP1. Interacts with chloride intracellular channel proteins CLIC1, CLIC4 and CLIC5. CSNK1D binding promotes its centrosomal subcellular location. Interacts with GM130/GOLGA2; leading to recruitment to the Golgi apparatus. Interacts with KCNQ1; targets protein kinase A (PKA) catalytic and regulatory subunits and protein phosphatase 1 (PP1), to the heterodimer KCNQ1-KCNE1. Interacts with PDE4DIP; this interaction stabilizes both proteins. In complex with PDE4DIP, recruits CAMSAP2 to the Golgi apparatus. Forms a pericentrosomal complex with CDK5RAP2, EB1/MAPRE1 and PDE4DIP; within this complex, MAPRE1 binding to CDK5RAP2 may be mediated by PDE4DIP. The interaction with PDE4DIP is isoform-specific. Interacts with MAPRE1 and MAPRE3. Interacts (via C-terminus) with CAMSAP2; this interaction is much stronger in the presence of PDE4DIP. Interacts with CAMSAP3. Interacts (via C-terminus) with the gamma-tubulin ring complex (gamma-TuRC), composed of gamma-tubulin, TUBGCP2, TUBGCP3, TUBGCP4, TUBGCP5 and TUBGCP6. Highly expressed in gastric parietal cells.

Its subcellular location is the golgi apparatus. The protein resides in the cytoplasm. It localises to the cytoskeleton. It is found in the microtubule organizing center. The protein localises to the centrosome. Functionally, scaffolding protein that assembles several protein kinases and phosphatases on the centrosome and Golgi apparatus. Required to maintain the integrity of the Golgi apparatus. Required for microtubule nucleation at the cis-side of the Golgi apparatus. Required for association of the centrosomes with the poles of the bipolar mitotic spindle during metaphase. In complex with PDE4DIP, recruits CAMSAP2 to the Golgi apparatus and tethers non-centrosomal minus-end microtubules to the Golgi, an important step for polarized cell movement. In complex with PDE4DIP, EB1/MAPRE1 and CDK5RAP2, contributes to microtubules nucleation and extension also from the centrosome to the cell periphery. The interaction with PDE4DIP is isoform-specific. This is A-kinase anchor protein 9 (AKAP9) from Oryctolagus cuniculus (Rabbit).